The chain runs to 223 residues: Agamous-like MADS-box protein AGL11 (223 aa).

Positions 1 to 61 constitute an MADS-box domain; the sequence is MGRGKIEIKR…GRVYEYSNNN (61 aa). Residues 87 to 177 form the K-box domain; the sequence is AQYYQQESAK…RTKIAEVERL (91 aa).

As to expression, expressed in flowers and seeds. Expressed in endotesta cell layer of developing seeds.

It localises to the nucleus. Its function is as follows. Probable transcription factor involved in seed development. Plays a role in seed morphogenesis by promoting the correct development of endotesta cell layer, which directs the further development of the seed coat, the endosperm, and consequently the embryo. This chain is Agamous-like MADS-box protein AGL11, found in Vitis vinifera (Grape).